We begin with the raw amino-acid sequence, 296 residues long: uncharacterized protein (296 aa).

The N-terminal 57 residues, 1 to 57 (MTSFLSFSAISAHPPTFSGASFRPRSFSPRLFKSCVKCTYAEAGLSSASWSAPIDIV), are a transit peptide targeting the chloroplast.

This sequence belongs to the NAD(P)-dependent epimerase/dehydratase family.

It localises to the plastid. The protein resides in the chloroplast. Its subcellular location is the plastoglobule. This is an uncharacterized protein from Arabidopsis thaliana (Mouse-ear cress).